A 68-amino-acid polypeptide reads, in one-letter code: Peptide Hp1090 (68 aa).

The signal sequence occupies residues 1 to 23 (MKTQFAIFLITLVLFQMFSQSDA). Position 36 is a phenylalanine amide (phenylalanine 36). Positions 40 to 68 (GLSDLDDLDESFDGEVSQADIDFLKELMQ) are excised as a propeptide.

It belongs to the non-disulfide-bridged peptide (NDBP) superfamily. Short antimicrobial peptide (group 4) family. In terms of tissue distribution, expressed by the venom gland.

The protein resides in the secreted. It localises to the target cell membrane. Its function is as follows. Amphipathic peptide which inhibits the growth of Gram-positive bacteria. This chain is Peptide Hp1090, found in Heterometrus petersii (Asian forest scorpion).